We begin with the raw amino-acid sequence, 865 residues long: General transcription factor 3C polypeptide 5 (865 aa).

Disordered stretches follow at residues 1–21, 111–163, 191–215, 391–522, and 669–865; these read MNDE…NNNS, RPNK…NEKF, NNNT…TVPI, QDNH…NKEG, and DNKM…EESE. Low complexity-rich tracts occupy residues 7–21, 115–126, 140–158, 199–210, and 401–411; these read KNNS…NNNS, QQTQTQTQTQTQ, QSPK…QQPQ, DNVNDSSSSSSS, and SKNNNNNNNNK. Basic and acidic residues-rich tracts occupy residues 412 to 439 and 448 to 489; these read DSIK…KQEE and NNEK…KGDD. 2 stretches are compositionally biased toward low complexity: residues 508-521 and 677-696; these read EGNN…NNKE and RSNT…PKST. Basic and acidic residues-rich tracts occupy residues 697-713, 757-766, and 773-786; these read QPKE…EPRP, QNKEIDESLK, and MEKD…KNEE. 2 stretches are compositionally biased toward acidic residues: residues 800-820 and 839-865; these read DYDD…DFDG and EDSE…EESE.

It belongs to the TFIIIC subunit 5 family. In terms of assembly, part of the TFIIIC complex.

It is found in the nucleus. Its function is as follows. Involved in RNA polymerase III-mediated transcription. Integral, tightly associated component of the DNA-binding TFIIIC2 subcomplex that directly binds tRNA and virus-associated RNA promoters. This chain is General transcription factor 3C polypeptide 5 (gtf3c5), found in Dictyostelium discoideum (Social amoeba).